A 293-amino-acid polypeptide reads, in one-letter code: MKRIFLFVATNIAVIAVMSIVLSLLGVDRFISQAGLNLPMLLVFSLVVGFTGAIISLLISKPMAKWSTGARVITAPSSSTELWLIDSVRKLSERAGIAMPEVAVYDGEPNAFATGAFKNSALVAVSTGLLQSMTKEEVEAVLAHEVAHVANGDMVTMTLVQGVVNTFVVFLARVVGYFVDRALSSRDSNNNGGQGIGYTITVLVCQVVFGIAASVIVAWFSRHREFRADAGAATLLGSPQPMMKALARLGGIAPNSLPEGMASMGINDKPGFAALFSSHPPIEQRIAALRSMQ.

A run of 2 helical transmembrane segments spans residues 4–24 (IFLF…VLSL) and 39–59 (PMLL…SLLI). Residue histidine 144 participates in Zn(2+) binding. Residue glutamate 145 is part of the active site. Residue histidine 148 coordinates Zn(2+). 2 helical membrane passes run 159 to 179 (LVQG…GYFV) and 200 to 220 (ITVL…VAWF). Glutamate 225 lines the Zn(2+) pocket.

Belongs to the peptidase M48B family. The cofactor is Zn(2+).

It localises to the cell inner membrane. This is Protease HtpX homolog from Herminiimonas arsenicoxydans.